Reading from the N-terminus, the 290-residue chain is Shikimate dehydrogenase (NADP(+)) (290 aa).

Residues 20-22 (SLS) and Thr-67 each bind shikimate. The active-site Proton acceptor is the Lys-71. The shikimate site is built by Asn-92 and Asp-107. NADP(+) contacts are provided by residues 132–136 (GAGGA) and Met-228. Tyr-230 serves as a coordination point for shikimate. Gly-251 is a binding site for NADP(+).

It belongs to the shikimate dehydrogenase family. As to quaternary structure, homodimer.

The enzyme catalyses shikimate + NADP(+) = 3-dehydroshikimate + NADPH + H(+). It functions in the pathway metabolic intermediate biosynthesis; chorismate biosynthesis; chorismate from D-erythrose 4-phosphate and phosphoenolpyruvate: step 4/7. Involved in the biosynthesis of the chorismate, which leads to the biosynthesis of aromatic amino acids. Catalyzes the reversible NADPH linked reduction of 3-dehydroshikimate (DHSA) to yield shikimate (SA). The sequence is that of Shikimate dehydrogenase (NADP(+)) from Geobacter sp. (strain M21).